The primary structure comprises 56 residues: Cytochrome b-c1 complex subunit 10 (56 aa).

Over 1–12 (MVTRFLGPRYRE) the chain is Mitochondrial matrix. Residues 13–35 (LVKNWVPTAYTWGAVGAVGLVWA) traverse the membrane as a helical segment. The Mitochondrial intermembrane segment spans residues 36-56 (TDWRLILDWVPYINGKFKKDN).

This sequence belongs to the UQCR11/QCR10 family. Component of the ubiquinol-cytochrome c oxidoreductase (cytochrome b-c1 complex, complex III, CIII), a multisubunit enzyme composed of 11 subunits. The complex is composed of 3 respiratory subunits cytochrome b, cytochrome c1 and Rieske protein UQCRFS1, 2 core protein subunits UQCRC1/QCR1 and UQCRC2/QCR2, and 6 low-molecular weight protein subunits UQCRH/QCR6, UQCRB/QCR7, UQCRQ/QCR8, UQCR10/QCR9, UQCR11/QCR10 and subunit 9, the cleavage product of Rieske protein UQCRFS1. The complex exists as an obligatory dimer and forms supercomplexes (SCs) in the inner mitochondrial membrane with NADH-ubiquinone oxidoreductase (complex I, CI) and cytochrome c oxidase (complex IV, CIV), resulting in different assemblies (supercomplex SCI(1)III(2)IV(1) and megacomplex MCI(2)III(2)IV(2)).

The protein resides in the mitochondrion inner membrane. Component of the ubiquinol-cytochrome c oxidoreductase, a multisubunit transmembrane complex that is part of the mitochondrial electron transport chain which drives oxidative phosphorylation. The respiratory chain contains 3 multisubunit complexes succinate dehydrogenase (complex II, CII), ubiquinol-cytochrome c oxidoreductase (cytochrome b-c1 complex, complex III, CIII) and cytochrome c oxidase (complex IV, CIV), that cooperate to transfer electrons derived from NADH and succinate to molecular oxygen, creating an electrochemical gradient over the inner membrane that drives transmembrane transport and the ATP synthase. The cytochrome b-c1 complex catalyzes electron transfer from ubiquinol to cytochrome c, linking this redox reaction to translocation of protons across the mitochondrial inner membrane, with protons being carried across the membrane as hydrogens on the quinol. In the process called Q cycle, 2 protons are consumed from the matrix, 4 protons are released into the intermembrane space and 2 electrons are passed to cytochrome c. QCR10 has a role in CIII assembly and RIP1 stability. In Homo sapiens (Human), this protein is Cytochrome b-c1 complex subunit 10 (UQCR11).